A 240-amino-acid polypeptide reads, in one-letter code: Chloroplastic group IIB intron splicing facilitator CRS2-B, chloroplastic (240 aa).

It belongs to the PTH family. CRS2 subfamily. As to quaternary structure, part of large ribonucleo-protein complexes that include group IIB introns and either CAF1 or CAF2.

The protein resides in the plastid. It localises to the chloroplast stroma. Required for the splicing of group IIB introns in chloroplasts. This is Chloroplastic group IIB intron splicing facilitator CRS2-B, chloroplastic (CRS2B) from Arabidopsis thaliana (Mouse-ear cress).